We begin with the raw amino-acid sequence, 831 residues long: Multiphosphoryl transfer protein (831 aa).

Positions 1 to 90 constitute an HPr domain; that stretch reads MLTIQFLCPL…EYILVRFIDS (90 aa). The active-site Pros-phosphohistidine intermediate; for HPr activity is the H15. At H15 the chain carries Phosphohistidine; by EI. The tract at residues 119-650 is PTS EI; that stretch reads GNVLASGVGV…AVKSQLRQLD (532 aa). H298 functions as the Tele-phosphohistidine intermediate; for PTS EI activity in the catalytic mechanism. H298 bears the Phosphohistidine; by autocatalysis mark. Positions 405 and 441 each coordinate phosphoenolpyruvate. Mg(2+)-binding residues include E540 and D564. Phosphoenolpyruvate-binding positions include 563–564 and R574; that span reads ND. C611 serves as the catalytic Proton donor; for EI activity. A PTS EIIA type-2 domain is found at 685-828; it reads PLLALENIFV…QSILTLLETE (144 aa). H747 acts as the Tele-phosphohistidine intermediate; for PTS EIIA activity in catalysis. Position 747 is a phosphohistidine; by HPr (H747).

Belongs to the PEP-utilizing enzyme family. Mg(2+) is required as a cofactor.

It localises to the cytoplasm. It carries out the reaction L-histidyl-[protein] + phosphoenolpyruvate = N(pros)-phospho-L-histidyl-[protein] + pyruvate. The catalysed reaction is D-fructose(out) + N(pros)-phospho-L-histidyl-[protein] = D-fructose 1-phosphate(in) + L-histidyl-[protein]. In terms of biological role, multifunctional protein that includes general (non sugar-specific) and sugar-specific components of the phosphoenolpyruvate-dependent sugar phosphotransferase system (sugar PTS). This major carbohydrate active transport system catalyzes the phosphorylation of incoming sugar substrates concomitantly with their translocation across the cell membrane. The enzyme II FryABC PTS system is involved in fructose transport. The protein is Multiphosphoryl transfer protein (fryA) of Shigella flexneri.